The sequence spans 425 residues: Gamma-glutamyl phosphate reductase (425 aa).

Belongs to the gamma-glutamyl phosphate reductase family.

It is found in the cytoplasm. The enzyme catalyses L-glutamate 5-semialdehyde + phosphate + NADP(+) = L-glutamyl 5-phosphate + NADPH + H(+). The protein operates within amino-acid biosynthesis; L-proline biosynthesis; L-glutamate 5-semialdehyde from L-glutamate: step 2/2. Its function is as follows. Catalyzes the NADPH-dependent reduction of L-glutamate 5-phosphate into L-glutamate 5-semialdehyde and phosphate. The product spontaneously undergoes cyclization to form 1-pyrroline-5-carboxylate. The polypeptide is Gamma-glutamyl phosphate reductase (Opitutus terrae (strain DSM 11246 / JCM 15787 / PB90-1)).